The chain runs to 36 residues: Pancreatic polypeptide (36 aa).

Tyr-36 bears the Tyrosine amide mark.

This sequence belongs to the NPY family.

Its subcellular location is the secreted. Functionally, hormone secreted by pancreatic cells that acts as a regulator of pancreatic and gastrointestinal functions probably by signaling through the G protein-coupled receptor NPY4R2. This is Pancreatic polypeptide (PPY) from Ceratotherium simum (White rhinoceros).